Here is a 114-residue protein sequence, read N- to C-terminus: Protein lin-52 homolog (114 aa).

A phosphoserine mark is found at S26 and S51.

The protein belongs to the lin-52 family. In terms of assembly, component of the DREAM complex (also named LINC complex) at least composed of E2F4, E2F5, LIN9, LIN37, LIN52, LIN54, MYBL1, MYBL2, RBL1, RBL2, RBBP4, TFDP1 and TFDP2. The complex exists in quiescent cells where it represses cell cycle-dependent genes. It dissociates in S phase when LIN9, LIN37, LIN52 and LIN54 form a subcomplex that binds to MYBL2.

This Pongo abelii (Sumatran orangutan) protein is Protein lin-52 homolog (LIN52).